Here is a 244-residue protein sequence, read N- to C-terminus: Phosphoadenosine 5'-phosphosulfate reductase (244 aa).

Residue Cys239 is the Nucleophile; cysteine thiosulfonate intermediate of the active site.

It belongs to the PAPS reductase family. CysH subfamily.

The protein resides in the cytoplasm. The catalysed reaction is [thioredoxin]-disulfide + sulfite + adenosine 3',5'-bisphosphate + 2 H(+) = [thioredoxin]-dithiol + 3'-phosphoadenylyl sulfate. It participates in sulfur metabolism; hydrogen sulfide biosynthesis; sulfite from sulfate: step 3/3. Functionally, catalyzes the formation of sulfite from phosphoadenosine 5'-phosphosulfate (PAPS) using thioredoxin as an electron donor. The protein is Phosphoadenosine 5'-phosphosulfate reductase of Salmonella heidelberg (strain SL476).